The chain runs to 340 residues: Ras association domain-containing protein 1 (340 aa).

S2 is subject to N-acetylserine. Residue S2 is modified to Phosphoserine. The mediates interaction with E4F1 stretch occupies residues 2–115 (SAEPELIELR…DLGWDSALER (114 aa)). The segment at 51-101 (GHRFQPAGPTTHTWCDLCGDFIWGVVRKGLQCAHCKFTCHYRCRALVCLDC) adopts a Phorbol-ester/DAG-type zinc-finger fold. Over residues 175–185 (SVPSSKKPPSL) the composition is skewed to low complexity. Residues 175–196 (SVPSSKKPPSLQDARRGTGRST) form a disordered region. The 95-residue stretch at 194–288 (RSTAVKRRTS…LSFVLKENDS (95 aa)) folds into the Ras-associating domain. The 48-residue stretch at 290 to 337 (EVNWDAFSMPELHNFLRILQREEEEHLRQILQKYSRCRQKIQEALHAC) folds into the SARAH domain. Residues 311–314 (EEEE) form an MOAP1-binding region.

In terms of assembly, interacts with MAP1S and XPA. Binds to the N-terminal of CDC20 during prometaphase. Binds to STK3/MST2 and STK4/MST1. Recruited to the TNFRSF1A and TNFRSF10A complexes in response to their respective cognate ligand, after internalization. Can self-associate. Part of a complex with MDM2, DAXX, RASSF1 and USP7. As to quaternary structure, interacts with MOAP1 and E4F1. Interacts with RSSF5 and probably associates with HRAS via a RSSF1 isoform A-RSSF5 heterodimer. Interacts (via C-terminus) with DAXX (via N-terminus); the interaction is independent of MDM2 and TP53. Interacts (via N-terminus) with MDM2 (via C-terminus); the interaction is independent of TP53. Interacts with RAB39A. Interacts with RAB39B; the interaction is weak. Interacts with ECM2. Interacts with RAB39B; the interaction is strong. Does not interact with RAB39A.

The protein localises to the cytoplasm. It is found in the cytoskeleton. The protein resides in the microtubule organizing center. Its subcellular location is the centrosome. It localises to the spindle. The protein localises to the spindle pole. It is found in the nucleus. Potential tumor suppressor. Required for death receptor-dependent apoptosis. Mediates activation of Mediates activation of STK3/MST2 and STK4/MST1 during Fas-induced apoptosis by preventing their dephosphorylation. When associated with MOAP1, promotes BAX conformational change and translocation to mitochondrial membranes in response to TNF and TNFSF10 stimulation. Isoform A interacts with CDC20, an activator of the anaphase-promoting complex, APC, resulting in the inhibition of APC activity and mitotic progression. Inhibits proliferation by negatively regulating cell cycle progression at the level of G1/S-phase transition by regulating accumulation of cyclin D1 protein. Isoform C has been shown not to perform these roles, no function has been identified for this isoform. Isoform A disrupts interactions among MDM2, DAXX and USP7, thus contributing to the efficient activation of TP53 by promoting MDM2 self-ubiquitination in cell-cycle checkpoint control in response to DNA damage. The chain is Ras association domain-containing protein 1 from Mus musculus (Mouse).